The sequence spans 528 residues: Probable rhamnogalacturonate lyase A (528 aa).

Residues 1–20 form the signal peptide; it reads MLSKATLLLFLPSWARVTYA. N-linked (GlcNAc...) asparagine glycosylation is present at Asn46. The cysteines at positions 50 and 93 are disulfide-linked. N-linked (GlcNAc...) asparagine glycosylation is present at Asn148. Cys184 and Cys193 are joined by a disulfide. The N-linked (GlcNAc...) asparagine glycan is linked to Asn351.

The protein belongs to the polysaccharide lyase 4 family.

Its subcellular location is the secreted. The catalysed reaction is Endotype eliminative cleavage of L-alpha-rhamnopyranosyl-(1-&gt;4)-alpha-D-galactopyranosyluronic acid bonds of rhamnogalacturonan I domains in ramified hairy regions of pectin leaving L-rhamnopyranose at the reducing end and 4-deoxy-4,5-unsaturated D-galactopyranosyluronic acid at the non-reducing end.. Pectinolytic enzymes consist of four classes of enzymes: pectin lyase, polygalacturonase, pectin methylesterase and rhamnogalacturonase. Degrades the rhamnogalacturonan I (RG-I) backbone of pectin. The sequence is that of Probable rhamnogalacturonate lyase A (rglA) from Aspergillus fumigatus (strain CBS 144.89 / FGSC A1163 / CEA10) (Neosartorya fumigata).